A 283-amino-acid polypeptide reads, in one-letter code: Pantothenate synthetase (283 aa).

Position 34 to 41 (34 to 41 (MGALHDGH)) interacts with ATP. His41 serves as the catalytic Proton donor. Gln65 lines the (R)-pantoate pocket. Beta-alanine is bound at residue Gln65. 152–155 (GQKD) contributes to the ATP binding site. Gln158 contacts (R)-pantoate. Residues Val181 and 189-192 (MSSR) contribute to the ATP site.

The protein belongs to the pantothenate synthetase family. In terms of assembly, homodimer.

The protein resides in the cytoplasm. The catalysed reaction is (R)-pantoate + beta-alanine + ATP = (R)-pantothenate + AMP + diphosphate + H(+). Its pathway is cofactor biosynthesis; (R)-pantothenate biosynthesis; (R)-pantothenate from (R)-pantoate and beta-alanine: step 1/1. In terms of biological role, catalyzes the condensation of pantoate with beta-alanine in an ATP-dependent reaction via a pantoyl-adenylate intermediate. This Nitrobacter hamburgensis (strain DSM 10229 / NCIMB 13809 / X14) protein is Pantothenate synthetase.